Consider the following 851-residue polypeptide: DNA mismatch repair protein MutS (851 aa).

Residue 614–621 participates in ATP binding; it reads GPNMGGKS.

The protein belongs to the DNA mismatch repair MutS family.

Its function is as follows. This protein is involved in the repair of mismatches in DNA. It is possible that it carries out the mismatch recognition step. This protein has a weak ATPase activity. This is DNA mismatch repair protein MutS from Yersinia enterocolitica serotype O:8 / biotype 1B (strain NCTC 13174 / 8081).